A 560-amino-acid polypeptide reads, in one-letter code: Eukaryotic translation initiation factor 3 subunit D-1 (560 aa).

Residues 98 to 166 form a disordered region; the sequence is VQKPPHQRGR…RGPPPKMRES (69 aa). Over residues 100–121 the composition is skewed to basic residues; the sequence is KPPHQRGRFRNMRNSRSGRGRN. Position 128 is a phosphothreonine (Thr128). Basic residues predominate over residues 147 to 156; it reads GRGMGKKFGH. An RNA gate region spans residues 291–305; sequence EFDLLTVNESSVEPP.

The protein belongs to the eIF-3 subunit D family. In terms of assembly, component of the eukaryotic translation initiation factor 3 (eIF-3) complex. The eIF-3 complex interacts with pix.

The protein resides in the cytoplasm. Its function is as follows. mRNA cap-binding component of the eukaryotic translation initiation factor 3 (eIF-3) complex, which is involved in protein synthesis of a specialized repertoire of mRNAs and, together with other initiation factors, stimulates binding of mRNA and methionyl-tRNAi to the 40S ribosome. The eIF-3 complex specifically targets and initiates translation of a subset of mRNAs involved in cell proliferation. In the eIF-3 complex, eif3d specifically recognizes and binds the 7-methylguanosine cap of a subset of mRNAs. The polypeptide is Eukaryotic translation initiation factor 3 subunit D-1 (Drosophila simulans (Fruit fly)).